The primary structure comprises 375 residues: Alpha-1,2-galactosyltransferase (375 aa).

At 1–2 the chain is on the cytoplasmic side; sequence MR. Residues 3-23 form a helical; Signal-anchor for type II membrane protein membrane-spanning segment; sequence FAPYLISAVVITTIILGGAWW. The Lumenal portion of the chain corresponds to 24-375; sequence TSAMDTKLQT…HIQNLLKPSS (352 aa).

Belongs to the glycosyltransferase 34 family. O-glycosylated.

It is found in the golgi apparatus membrane. Involved in the O- and N-linked oligosaccharide modification of proteins transported through the Golgi stack. This occurs in cis Golgi where the enzyme transfers galactose from UDP-galactose to a variety of mannose based acceptors. The sequence is that of Alpha-1,2-galactosyltransferase (gma12) from Schizosaccharomyces pombe (strain 972 / ATCC 24843) (Fission yeast).